Here is a 318-residue protein sequence, read N- to C-terminus: ADP-L-glycero-D-manno-heptose-6-epimerase (318 aa).

NADP(+) is bound by residues 10–11 (FI), 31–32 (DN), Lys38, Lys53, 76–80 (QGACS), and Asn93. Residue Tyr141 is the Proton acceptor of the active site. NADP(+) is bound at residue Lys145. Asn172 is a substrate binding site. Positions 173 and 181 each coordinate NADP(+). Lys181 acts as the Proton acceptor in catalysis. Residues Arg183, His190, 204-207 (FEGS), Arg212, and Tyr276 contribute to the substrate site.

This sequence belongs to the NAD(P)-dependent epimerase/dehydratase family. HldD subfamily. Homopentamer. It depends on NADP(+) as a cofactor.

It catalyses the reaction ADP-D-glycero-beta-D-manno-heptose = ADP-L-glycero-beta-D-manno-heptose. The protein operates within nucleotide-sugar biosynthesis; ADP-L-glycero-beta-D-manno-heptose biosynthesis; ADP-L-glycero-beta-D-manno-heptose from D-glycero-beta-D-manno-heptose 7-phosphate: step 4/4. Functionally, catalyzes the interconversion between ADP-D-glycero-beta-D-manno-heptose and ADP-L-glycero-beta-D-manno-heptose via an epimerization at carbon 6 of the heptose. In Brachyspira hyodysenteriae (strain ATCC 49526 / WA1), this protein is ADP-L-glycero-D-manno-heptose-6-epimerase.